We begin with the raw amino-acid sequence, 92 residues long: MVRSVWKGPFVEGSLLKKADAARASGRHDVIKIWSRRSTILPQFVGLTFGVYNGQKHVPVAVNEEMVGHKFGEFSPTRTFHGHSGDKKAKKA.

Belongs to the universal ribosomal protein uS19 family.

Its function is as follows. Protein S19 forms a complex with S13 that binds strongly to the 16S ribosomal RNA. This chain is Small ribosomal subunit protein uS19, found in Bradyrhizobium diazoefficiens (strain JCM 10833 / BCRC 13528 / IAM 13628 / NBRC 14792 / USDA 110).